The primary structure comprises 160 residues: Arsenate reductase 2.1 (160 aa).

Positions 42–143 constitute a Rhodanese domain; sequence SNPRVAIIDV…WELSGQPVCR (102 aa). The Cysteine persulfide intermediate role is filled by C94.

The enzyme catalyses [glutaredoxin]-dithiol + arsenate + glutathione + H(+) = glutathionyl-S-S-[glutaredoxin] + arsenite + H2O. Its function is as follows. Possesses arsenate reductase activity in vitro. Catalyzes the reduction of arsenate [As(V)] to arsenite [As(III)]. May play a role in arsenic retention in roots. Functionally, possesses phosphatase activity towards p-nitrophenyl phosphate in vitro. This chain is Arsenate reductase 2.1 (ACR2.1), found in Oryza sativa subsp. japonica (Rice).